The sequence spans 419 residues: N-acylglucosamine 2-epimerase (419 aa).

The tract at residues 185–206 (LLSLVEQLGEEDEELTNMYAEL) is leucine-zipper. S418 is modified (phosphoserine).

This sequence belongs to the N-acylglucosamine 2-epimerase family. Homodimer. Forms a heterodimer with renin and inhibits its activity.

The enzyme catalyses an N-acyl-D-glucosamine = an N-acyl-D-mannosamine. It participates in amino-sugar metabolism; N-acetylneuraminate degradation. Functionally, catalyzes the interconversion of N-acetylglucosamine to N-acetylmannosamine. Involved in the N-glycolylneuraminic acid (Neu5Gc) degradation pathway. This Mus musculus (Mouse) protein is N-acylglucosamine 2-epimerase (Renbp).